A 342-amino-acid polypeptide reads, in one-letter code: MKVLSKLKPAPGLWLHKAPTPKPGRDEVLIKIKKTAICGTDLHIYKWDEWAQKTIPVPMHVGHEFVGEIVEVGEAASALAVGDRVSGEGHITCGDCRNCRAGKRHLCRYTVGVGVNRPGAFAEYLVIPAKNAYKIPAKISDDIAAILDPFGNAAHSALEFDLVGEDVLITGAGPVGLMSAAIARHVGARHVVITDVNDYRLALAEKVGVTAAVNSTKTPLTETMKNLGMTEGFDVGLEMSGNAEAFRSMLTVMNNGGKIAFLGIPPEPFAIDWNQVVFKSLLIKGIYGRRMFETWYKMTNLLLSGLDISPIITHEFPMKDFQQAFDVMLSGKTGKVILNWEQ.

C38 provides a ligand contact to Zn(2+). Active-site charge relay system residues include T40 and H43. 6 residues coordinate Zn(2+): H63, E64, C93, C96, C99, and C107. Residues V175, D195, R200, 262-264 (LGI), and 286-287 (IY) each bind NAD(+).

This sequence belongs to the zinc-containing alcohol dehydrogenase family. Homotetramer. Requires Zn(2+) as cofactor.

Its subcellular location is the cytoplasm. The enzyme catalyses L-threonine + NAD(+) = (2S)-2-amino-3-oxobutanoate + NADH + H(+). The protein operates within amino-acid degradation; L-threonine degradation via oxydo-reductase pathway; glycine from L-threonine: step 1/2. In terms of biological role, catalyzes the NAD(+)-dependent oxidation of L-threonine to 2-amino-3-ketobutyrate. The sequence is that of L-threonine 3-dehydrogenase from Coxiella burnetii (strain Dugway 5J108-111).